Here is a 298-residue protein sequence, read N- to C-terminus: 4-hydroxy-tetrahydrodipicolinate synthase (298 aa).

A pyruvate-binding site is contributed by threonine 48. Residue tyrosine 137 is the Proton donor/acceptor of the active site. Lysine 166 (schiff-base intermediate with substrate) is an active-site residue. Isoleucine 207 lines the pyruvate pocket.

This sequence belongs to the DapA family. As to quaternary structure, homotetramer; dimer of dimers.

It is found in the cytoplasm. It catalyses the reaction L-aspartate 4-semialdehyde + pyruvate = (2S,4S)-4-hydroxy-2,3,4,5-tetrahydrodipicolinate + H2O + H(+). It participates in amino-acid biosynthesis; L-lysine biosynthesis via DAP pathway; (S)-tetrahydrodipicolinate from L-aspartate: step 3/4. In terms of biological role, catalyzes the condensation of (S)-aspartate-beta-semialdehyde [(S)-ASA] and pyruvate to 4-hydroxy-tetrahydrodipicolinate (HTPA). This is 4-hydroxy-tetrahydrodipicolinate synthase from Campylobacter jejuni subsp. jejuni serotype O:6 (strain 81116 / NCTC 11828).